Consider the following 206-residue polypeptide: D-ribitol-5-phosphate phosphatase (206 aa).

The active-site Nucleophile is the Asp-8. Mg(2+) contacts are provided by Asp-8 and Asp-172.

The protein belongs to the HAD-like hydrolase superfamily. The cofactor is Mg(2+).

It catalyses the reaction D-ribitol 1-phosphate + H2O = ribitol + phosphate. The enzyme catalyses D-ribitol 5-phosphate + H2O = ribitol + phosphate. The catalysed reaction is 5-amino-6-(5-phospho-D-ribitylamino)uracil + H2O = 5-amino-6-(D-ribitylamino)uracil + phosphate. It functions in the pathway cofactor biosynthesis; riboflavin biosynthesis; 5-amino-6-(D-ribitylamino)uracil from GTP: step 4/4. Functionally, catalyzes the dephosphorylation of D-ribitol-5-phosphate and D-ribitol-1-phosphate. Is also able to dephosphorylate 5-amino-6-(5-phospho-D-ribitylamino)uracil, and thus could be involved in the riboflavin biosynthesis pathway. The chain is D-ribitol-5-phosphate phosphatase from Bacteroides thetaiotaomicron (strain ATCC 29148 / DSM 2079 / JCM 5827 / CCUG 10774 / NCTC 10582 / VPI-5482 / E50).